The primary structure comprises 154 residues: MSNKEEEKEKERFSEEYIENAKTQINKLFFDRIGGLIGFSDQDNNQDINHKNTLNLNYQEREEEDDDEEETTQTVNVYSTIGINNNNNINKTFKINDNETIIINNNNNDNDNNNKEKEDNDEKEYQRIKSEYIKISKRYFELKEKRIIKKRNKE.

The disordered stretch occupies residues 104–124 (NNNNNDNDNNNKEKEDNDEKE). Over residues 112-124 (NNNKEKEDNDEKE) the composition is skewed to basic and acidic residues.

This is an uncharacterized protein from Dictyostelium discoideum (Social amoeba).